Reading from the N-terminus, the 312-residue chain is Olfactory receptor 8H3 (312 aa).

At 1–26 (MMGRRNDTNVADFILTGLSDSEEVQM) the chain is on the extracellular side. Residue asparagine 6 is glycosylated (N-linked (GlcNAc...) asparagine). The chain crosses the membrane as a helical span at residues 27-47 (ALFMLFLLIYLITMLGNVGML). At 48-55 (LIIRLDLQ) the chain is on the cytoplasmic side. The chain crosses the membrane as a helical span at residues 56–76 (LHTPMYFFLTHLSFIDLSYST). The Extracellular portion of the chain corresponds to 77 to 99 (VVTPKTLANLLTSNYISFTGCFA). Cysteine 97 and cysteine 189 are oxidised to a cystine. Residues 100–120 (QMFCFVFLGTAECYLLSSMAY) form a helical membrane-spanning segment. Residues 121–139 (DRYAAICSPLHYTVIMPKR) lie on the Cytoplasmic side of the membrane. A helical membrane pass occupies residues 140-160 (LCLALITGPYVIGFMDSFVNV). The Extracellular portion of the chain corresponds to 161–197 (VSMSRLHFCDSNIIHHFFCDTSPILALSCTDTDNTEM). The helical transmembrane segment at 198–217 (LIFIIAGSTLMVSLITISAS) threads the bilayer. Residues 218 to 237 (YVSILSTILKINSTSGKQKA) are Cytoplasmic-facing. The helical transmembrane segment at 238-258 (FSTCVSHLLGVTIFYGTMIFT) threads the bilayer. Over 259–271 (YLKPRKSYSLGRD) the chain is Extracellular. A helical transmembrane segment spans residues 272-292 (QVAPVFYTIVIPMLNPLIYSL). At 293–312 (RNREVKNALIRVMQRRQDSR) the chain is on the cytoplasmic side.

It belongs to the G-protein coupled receptor 1 family.

Its subcellular location is the cell membrane. Odorant receptor. In Homo sapiens (Human), this protein is Olfactory receptor 8H3 (OR8H3).